Consider the following 159-residue polypeptide: SsrA-binding protein (159 aa).

The segment at 133–159 is disordered; that stretch reads KKLHDKRETSKERDWNRQKNRLLKERG. Positions 137-159 are enriched in basic and acidic residues; sequence DKRETSKERDWNRQKNRLLKERG.

Belongs to the SmpB family.

The protein resides in the cytoplasm. Required for rescue of stalled ribosomes mediated by trans-translation. Binds to transfer-messenger RNA (tmRNA), required for stable association of tmRNA with ribosomes. tmRNA and SmpB together mimic tRNA shape, replacing the anticodon stem-loop with SmpB. tmRNA is encoded by the ssrA gene; the 2 termini fold to resemble tRNA(Ala) and it encodes a 'tag peptide', a short internal open reading frame. During trans-translation Ala-aminoacylated tmRNA acts like a tRNA, entering the A-site of stalled ribosomes, displacing the stalled mRNA. The ribosome then switches to translate the ORF on the tmRNA; the nascent peptide is terminated with the 'tag peptide' encoded by the tmRNA and targeted for degradation. The ribosome is freed to recommence translation, which seems to be the essential function of trans-translation. The chain is SsrA-binding protein from Sinorhizobium medicae (strain WSM419) (Ensifer medicae).